The chain runs to 678 residues: Glutamic acid-rich protein (678 aa).

Residues 1–25 (MNVLFLSYNICILFFVVCTLNFSTK) form the signal peptide. The segment covering 56 to 79 (EKNKDDNSKSETLLKEEKDEKDDV) has biased composition (basic and acidic residues). Disordered regions lie at residues 56–194 (EKNK…NLDE), 225–445 (ISSV…VVKN), and 520–678 (VVPR…NAKI). A compositionally biased stretch (polar residues) spans 80–107 (PTTSNDNLKNAHNNNEISSSTDPTNIIN). Residues 109-120 (NDKDNENSVDKK) are compositionally biased toward basic and acidic residues. A run of 15 repeats spans residues 120–122 (KKD), 123–125 (KKE), 126–128 (KKH), 129–131 (KKD), 132–134 (KKE), 135–137 (KKE), 138–140 (KKD), 141–143 (KKE), 144–146 (KKD), 147–149 (KKE), 150–152 (KKH), 153–155 (KKE), 156–158 (KKH), 159–161 (KKD), and 162–164 (KKK). The tract at residues 120 to 164 (KKDKKEKKHKKDKKEKKEKKDKKEKKDKKEKKHKKEKKHKKDKKK) is 15 X 3 AA tandem repeats of K-K-[DEHK]. Over residues 121–165 (KDKKEKKHKKDKKEKKEKKDKKEKKDKKEKKHKKEKKHKKDKKKK) the composition is skewed to basic residues. 2 stretches are compositionally biased toward basic and acidic residues: residues 231–329 (TSND…EEKE) and 371–411 (PEEH…EHKS). 14 repeat units span residues 372-376 (EEHKE), 377-381 (GEHKE), 382-386 (EEHKE), 387-391 (GEHKE), 392-396 (GEHKE), 397-401 (EEHKE), 402-406 (EEHKK), 407-411 (EEHKS), 412-416 (KEHKS), 417-421 (KGKKD), 422-426 (KGKKD), 427-431 (KGKHK), 432-436 (KAKKE), and 437-441 (KVKKH). Residues 372-416 (EEHKEGEHKEEEHKEGEHKEGEHKEEEHKEEEHKKEEHKSKEHKS) form a 9 X 5 AA tandem repeats of [EGK]-E-H-K-[EKS] region. Basic residues predominate over residues 412–443 (KEHKSKGKKDKGKKDKGKHKKAKKEKVKKHVV). The 5 X 5 AA tandem repeats of K-[GAV]-K-[KH]-[DKEH] stretch occupies residues 417–441 (KGKKDKGKKDKGKHKKAKKEKVKKH). Residues 532 to 565 (AKIEEAELQKQKHVDKEEDKKEESKEVQEESKEV) are compositionally biased toward basic and acidic residues. The segment covering 566 to 663 (QEDEEEVEED…EEEEEEEEEE (98 aa)) has biased composition (acidic residues). Over residues 667-678 (KIKRNLRKNAKI) the composition is skewed to basic residues.

This chain is Glutamic acid-rich protein (GARP), found in Plasmodium falciparum (isolate FC27 / Papua New Guinea).